The chain runs to 271 residues: Putative phosphoenolpyruvate synthase regulatory protein (271 aa).

ADP is bound at residue 151–158 (GVSRSGKT).

The protein belongs to the pyruvate, phosphate/water dikinase regulatory protein family. PSRP subfamily.

The enzyme catalyses [pyruvate, water dikinase] + ADP = [pyruvate, water dikinase]-phosphate + AMP + H(+). It catalyses the reaction [pyruvate, water dikinase]-phosphate + phosphate + H(+) = [pyruvate, water dikinase] + diphosphate. In terms of biological role, bifunctional serine/threonine kinase and phosphorylase involved in the regulation of the phosphoenolpyruvate synthase (PEPS) by catalyzing its phosphorylation/dephosphorylation. The protein is Putative phosphoenolpyruvate synthase regulatory protein of Burkholderia mallei (strain NCTC 10247).